A 309-amino-acid polypeptide reads, in one-letter code: L-aminoadipate-semialdehyde dehydrogenase-phosphopantetheinyl transferase (309 aa).

CoA-binding positions include arginine 47, 86–91 (RTSKGK), and 108–111 (NISH). 2 residues coordinate Mg(2+): aspartate 129 and glutamate 181. 181 to 185 (ESFIK) contributes to the CoA binding site.

Belongs to the P-Pant transferase superfamily. AcpS family. In terms of assembly, monomer. Mg(2+) is required as a cofactor.

The protein localises to the cytoplasm. It is found in the cytosol. It carries out the reaction apo-[ACP] + CoA = holo-[ACP] + adenosine 3',5'-bisphosphate + H(+). The catalysed reaction is apo-[ACP] + acetyl-CoA = acetyl-[ACP] + adenosine 3',5'-bisphosphate + H(+). Functionally, catalyzes the post-translational modification of target proteins by phosphopantetheine. Can transfer the 4'-phosphopantetheine moiety from coenzyme A, regardless of whether the CoA is presented in the free thiol form or as an acetyl thioester, to a serine residue of a broad range of acceptors including the acyl carrier domain of FASN. This chain is L-aminoadipate-semialdehyde dehydrogenase-phosphopantetheinyl transferase (Aasdhppt), found in Mus musculus (Mouse).